The sequence spans 386 residues: Succinate--CoA ligase [ADP-forming] subunit beta (386 aa).

Residues 9 to 244 (KQVLRSSNLN…DSQIDAKEAA (236 aa)) form the ATP-grasp domain. ATP-binding positions include K46, 53–55 (GRG), E99, L102, and E107. 2 residues coordinate Mg(2+): N199 and D213. Substrate is bound by residues N264 and 321–323 (GIV).

Belongs to the succinate/malate CoA ligase beta subunit family. As to quaternary structure, heterotetramer of two alpha and two beta subunits. It depends on Mg(2+) as a cofactor.

It catalyses the reaction succinate + ATP + CoA = succinyl-CoA + ADP + phosphate. The enzyme catalyses GTP + succinate + CoA = succinyl-CoA + GDP + phosphate. Its pathway is carbohydrate metabolism; tricarboxylic acid cycle; succinate from succinyl-CoA (ligase route): step 1/1. Functionally, succinyl-CoA synthetase functions in the citric acid cycle (TCA), coupling the hydrolysis of succinyl-CoA to the synthesis of either ATP or GTP and thus represents the only step of substrate-level phosphorylation in the TCA. The beta subunit provides nucleotide specificity of the enzyme and binds the substrate succinate, while the binding sites for coenzyme A and phosphate are found in the alpha subunit. In Thiobacillus denitrificans (strain ATCC 25259 / T1), this protein is Succinate--CoA ligase [ADP-forming] subunit beta.